Consider the following 318-residue polypeptide: Porphobilinogen deaminase (318 aa).

S-(dipyrrolylmethanemethyl)cysteine is present on cysteine 248.

Belongs to the HMBS family. Monomer. Dipyrromethane serves as cofactor.

The enzyme catalyses 4 porphobilinogen + H2O = hydroxymethylbilane + 4 NH4(+). Its pathway is porphyrin-containing compound metabolism; protoporphyrin-IX biosynthesis; coproporphyrinogen-III from 5-aminolevulinate: step 2/4. In terms of biological role, tetrapolymerization of the monopyrrole PBG into the hydroxymethylbilane pre-uroporphyrinogen in several discrete steps. This Caulobacter sp. (strain K31) protein is Porphobilinogen deaminase.